Reading from the N-terminus, the 235-residue chain is Glycerol-3-phosphate acyltransferase (235 aa).

Helical transmembrane passes span 4 to 24 (LLAI…LVAG), 56 to 76 (VVTL…VAFF), 94 to 114 (LLAG…GFKG), 122 to 142 (AGML…IFLL), 152 to 172 (VASM…KYIF), and 191 to 211 (FHDS…LAIL).

The protein belongs to the PlsY family. Probably interacts with PlsX.

It is found in the cell inner membrane. The catalysed reaction is an acyl phosphate + sn-glycerol 3-phosphate = a 1-acyl-sn-glycero-3-phosphate + phosphate. It functions in the pathway lipid metabolism; phospholipid metabolism. Its function is as follows. Catalyzes the transfer of an acyl group from acyl-phosphate (acyl-PO(4)) to glycerol-3-phosphate (G3P) to form lysophosphatidic acid (LPA). This enzyme utilizes acyl-phosphate as fatty acyl donor, but not acyl-CoA or acyl-ACP. This chain is Glycerol-3-phosphate acyltransferase, found in Pelodictyon phaeoclathratiforme (strain DSM 5477 / BU-1).